Consider the following 196-residue polypeptide: uncharacterized protein (196 aa).

Positions 122 to 135 are enriched in basic and acidic residues; the sequence is SEIEKKQEPIERKT. A disordered region spans residues 122–150; that stretch reads SEIEKKQEPIERKTSTTTNTESNQEKPLR.

This is an uncharacterized protein from Leptospira interrogans.